The sequence spans 332 residues: rRNA biogenesis protein rrp-36 (332 aa).

Disordered stretches follow at residues 1–91, 104–196, 243–262, and 312–332; these read MPAV…ASQL, GALK…SGKS, SMES…ELLS, and KKIA…AEDR. Acidic residues-rich tracts occupy residues 27 to 45, 53 to 77, and 117 to 127; these read EPDS…EEEG, DTEE…DSDA, and EDGSDDDEEKE. Basic and acidic residues-rich tracts occupy residues 128–142 and 165–183; these read EPNW…MKAK and RRRD…RDPR. A coiled-coil region spans residues 212–274; the sequence is DYQEDEMKQL…KKKEKELIKQ (63 aa). The segment covering 315-332 has biased composition (basic and acidic residues); it reads AGKEKKALPLARRTAEDR.

It belongs to the RRP36 family. Associates with 90S and pre-40S pre-ribosomal particles.

The protein localises to the nucleus. It is found in the nucleolus. In terms of biological role, component of the 90S pre-ribosome involved in the maturation of rRNAs. Required for early cleavages of the pre-RNAs in the 40S ribosomal subunit maturation pathway. In Neurospora crassa (strain ATCC 24698 / 74-OR23-1A / CBS 708.71 / DSM 1257 / FGSC 987), this protein is rRNA biogenesis protein rrp-36 (rrp-36).